The chain runs to 547 residues: Glucose-6-phosphate isomerase (547 aa).

Glu-354 acts as the Proton donor in catalysis. Active-site residues include His-385 and Lys-513.

The protein belongs to the GPI family.

The protein resides in the cytoplasm. It catalyses the reaction alpha-D-glucose 6-phosphate = beta-D-fructose 6-phosphate. It functions in the pathway carbohydrate biosynthesis; gluconeogenesis. It participates in carbohydrate degradation; glycolysis; D-glyceraldehyde 3-phosphate and glycerone phosphate from D-glucose: step 2/4. In terms of biological role, catalyzes the reversible isomerization of glucose-6-phosphate to fructose-6-phosphate. The sequence is that of Glucose-6-phosphate isomerase from Erwinia tasmaniensis (strain DSM 17950 / CFBP 7177 / CIP 109463 / NCPPB 4357 / Et1/99).